The primary structure comprises 244 residues: tRNA (guanine-N(7)-)-methyltransferase (244 aa).

Positions 75, 100, 127, and 150 each coordinate S-adenosyl-L-methionine. Aspartate 150 is a catalytic residue. Substrate contacts are provided by residues lysine 154, aspartate 186, and 223 to 226; that span reads TRFE.

This sequence belongs to the class I-like SAM-binding methyltransferase superfamily. TrmB family.

It catalyses the reaction guanosine(46) in tRNA + S-adenosyl-L-methionine = N(7)-methylguanosine(46) in tRNA + S-adenosyl-L-homocysteine. Its pathway is tRNA modification; N(7)-methylguanine-tRNA biosynthesis. In terms of biological role, catalyzes the formation of N(7)-methylguanine at position 46 (m7G46) in tRNA. The chain is tRNA (guanine-N(7)-)-methyltransferase from Xylella fastidiosa (strain M23).